Reading from the N-terminus, the 372-residue chain is Ribosomal RNA small subunit methyltransferase H (372 aa).

S-adenosyl-L-methionine contacts are provided by residues 78 to 80, Asp-97, Tyr-124, Asp-148, and Gln-155; that span reads GGH.

It belongs to the methyltransferase superfamily. RsmH family.

It localises to the cytoplasm. The enzyme catalyses cytidine(1402) in 16S rRNA + S-adenosyl-L-methionine = N(4)-methylcytidine(1402) in 16S rRNA + S-adenosyl-L-homocysteine + H(+). Its function is as follows. Specifically methylates the N4 position of cytidine in position 1402 (C1402) of 16S rRNA. The chain is Ribosomal RNA small subunit methyltransferase H from Mycobacterium leprae (strain Br4923).